The chain runs to 376 residues: Partitioning defective 6 homolog gamma (376 aa).

The 81-residue stretch at 18–98 (AVEVKSKFGA…PLLRVFIQKR (81 aa)) folds into the PB1 domain. Residues 127–254 (RRRAHLDIGL…VTVKPANQRN (128 aa)) form an interaction with PARD3 and CDC42 region. Residues 134–151 (IGLPRDFRPVSSIIDVDL) form the Pseudo-CRIB domain. One can recognise a PDZ domain in the interval 158–251 (RVRLHRHGCE…NLIVTVKPAN (94 aa)). The tract at residues 356–376 (PRHSLALPPGGVEEHGPAVTL) is disordered. Residues 367 to 376 (VEEHGPAVTL) show a composition bias toward basic and acidic residues.

The protein belongs to the PAR6 family. As to quaternary structure, interacts with PARD3. Interacts with GTP-bound forms of CDC42, RHOQ/TC10 and RAC1. Interacts with the N-terminal part of PRKCI and PRKCZ. Widely expressed, with a higher expression in fetal and adult kidney.

It localises to the cytoplasm. The protein localises to the cell membrane. Its subcellular location is the cell junction. It is found in the tight junction. In terms of biological role, adapter protein involved in asymmetrical cell division and cell polarization processes. May play a role in the formation of epithelial tight junctions. The PARD6-PARD3 complex links GTP-bound Rho small GTPases to atypical protein kinase C proteins. In Homo sapiens (Human), this protein is Partitioning defective 6 homolog gamma (PARD6G).